The sequence spans 122 residues: Basic phospholipase A2 (122 aa).

7 disulfides stabilise this stretch: Cys26-Cys115, Cys28-Cys44, Cys43-Cys95, Cys49-Cys122, Cys50-Cys88, Cys57-Cys81, and Cys75-Cys86. Ca(2+) contacts are provided by Tyr27, Gly29, and Gly31. The active site involves His47. Asp48 is a Ca(2+) binding site. The active site involves Asp89.

This sequence belongs to the phospholipase A2 family. Group II subfamily. D49 sub-subfamily. Ca(2+) is required as a cofactor. Expressed by the venom gland.

Its subcellular location is the secreted. The enzyme catalyses a 1,2-diacyl-sn-glycero-3-phosphocholine + H2O = a 1-acyl-sn-glycero-3-phosphocholine + a fatty acid + H(+). Its function is as follows. Snake venom phospholipase A2 (PLA2) that does not inhibit platelet aggregation. Exhibits cytotoxic and anticoagulant activity. Induces Ehrlich tumor growth but not angiogenesis. PLA2 catalyzes the calcium-dependent hydrolysis of the 2-acyl groups in 3-sn-phosphoglycerides. This is Basic phospholipase A2 from Bothrops leucurus (Whitetail lancehead).